The chain runs to 238 residues: Probable transcriptional regulatory protein VIBHAR_07036 (238 aa).

It belongs to the TACO1 family.

The protein localises to the cytoplasm. The polypeptide is Probable transcriptional regulatory protein VIBHAR_07036 (Vibrio campbellii (strain ATCC BAA-1116)).